The primary structure comprises 124 residues: MPTINQLVRHGRKVIKEKSKSPALQGHPQKRGVCVRVSTMTPKKPNSALRKIARVRLSNGIEVTAYIPGIGHNLQEHSVVLVRGGRVKDLPGIRYKIIRGALDTDGVENRKQSRSKYGTKRPKK.

A 3-methylthioaspartic acid modification is found at D89. The disordered stretch occupies residues 104 to 124; sequence TDGVENRKQSRSKYGTKRPKK. A compositionally biased stretch (basic residues) spans 112–124; that stretch reads QSRSKYGTKRPKK.

This sequence belongs to the universal ribosomal protein uS12 family. In terms of assembly, part of the 30S ribosomal subunit. Contacts proteins S8 and S17. May interact with IF1 in the 30S initiation complex.

In terms of biological role, with S4 and S5 plays an important role in translational accuracy. Functionally, interacts with and stabilizes bases of the 16S rRNA that are involved in tRNA selection in the A site and with the mRNA backbone. Located at the interface of the 30S and 50S subunits, it traverses the body of the 30S subunit contacting proteins on the other side and probably holding the rRNA structure together. The combined cluster of proteins S8, S12 and S17 appears to hold together the shoulder and platform of the 30S subunit. This is Small ribosomal subunit protein uS12 from Thermosipho melanesiensis (strain DSM 12029 / CIP 104789 / BI429).